A 504-amino-acid chain; its full sequence is 26S proteasome non-ATPase regulatory subunit 3 (504 aa).

Positions 254–434 (ARYFYYQGRI…GYLQSRENID (181 aa)) constitute a PCI domain. The interval 485–504 (KEEMERQAEESSDNEGDSDF) is disordered. The span at 494-504 (ESSDNEGDSDF) shows a compositional bias: acidic residues.

The protein belongs to the proteasome subunit S3 family. As to quaternary structure, the 26S proteasome is composed of a core protease, known as the 20S proteasome, capped at one or both ends by the 19S regulatory complex (RC). The RC is composed of at least 18 different subunits in two subcomplexes, the base and the lid, which form the portions proximal and distal to the 20S proteolytic core, respectively.

Its function is as follows. Acts as a regulatory subunit of the 26 proteasome which is involved in the ATP-dependent degradation of ubiquitinated proteins. This Dictyostelium discoideum (Social amoeba) protein is 26S proteasome non-ATPase regulatory subunit 3 (psmD3).